A 294-amino-acid chain; its full sequence is 4-hydroxy-tetrahydrodipicolinate synthase (294 aa).

Residue T45 coordinates pyruvate. Residue Y133 is the Proton donor/acceptor of the active site. K161 acts as the Schiff-base intermediate with substrate in catalysis. I203 lines the pyruvate pocket.

It belongs to the DapA family. As to quaternary structure, homotetramer; dimer of dimers.

It localises to the cytoplasm. It carries out the reaction L-aspartate 4-semialdehyde + pyruvate = (2S,4S)-4-hydroxy-2,3,4,5-tetrahydrodipicolinate + H2O + H(+). It functions in the pathway amino-acid biosynthesis; L-lysine biosynthesis via DAP pathway; (S)-tetrahydrodipicolinate from L-aspartate: step 3/4. Its function is as follows. Catalyzes the condensation of (S)-aspartate-beta-semialdehyde [(S)-ASA] and pyruvate to 4-hydroxy-tetrahydrodipicolinate (HTPA). The sequence is that of 4-hydroxy-tetrahydrodipicolinate synthase from Shewanella sp. (strain ANA-3).